The chain runs to 397 residues: Decapping and exoribonuclease protein (397 aa).

The span at 1 to 10 (MEPRGTKRKA) shows a compositional bias: basic residues. The interval 1-30 (MEPRGTKRKAEKTEVEKPLNKLPRAVPSLR) is disordered. Substrate is bound by residues arginine 58, glutamate 101, and 131 to 133 (WRG). Residue methionine 185 coordinates adenosine 3',5'-bisphosphate. Glutamate 192 provides a ligand contact to Mg(2+). Residues cysteine 217 and glutamate 234 each coordinate substrate. Glutamate 234, aspartate 236, glutamate 253, and leucine 254 together coordinate Mg(2+). Residue aspartate 236 participates in adenosine 3',5'-bisphosphate binding. The interval 253–256 (ELKT) is adenosine 3',5'-bisphosphate; inhibitor. Substrate contacts are provided by lysine 255 and glutamine 280. Glutamine 280 provides a ligand contact to adenosine 3',5'-bisphosphate. Position 392 is a phosphothreonine (threonine 392). A Phosphoserine modification is found at serine 394.

This sequence belongs to the DXO/Dom3Z family. It depends on Mg(2+) as a cofactor.

It localises to the nucleus. The catalysed reaction is a 5'-end triphospho-ribonucleoside in mRNA + H2O = a 5'-end phospho-ribonucleoside in mRNA + diphosphate + H(+). It catalyses the reaction a 5'-end NAD(+)-phospho-ribonucleoside in mRNA + H2O = a 5'-end phospho-ribonucleoside in mRNA + NAD(+) + H(+). It carries out the reaction a 5'-end NAD(+)-phospho-ribonucleoside in snoRNA + H2O = a 5'-end phospho-ribonucleoside in snoRNA + NAD(+) + H(+). The enzyme catalyses a 5'-end (N(7)-methyl 5'-triphosphoguanosine)-ribonucleoside-ribonucleotide in mRNA + H2O = a (N(7)-methyl 5'-triphosphoguanosine)-nucleoside + a 5'-end phospho-ribonucleoside in mRNA + H(+). The catalysed reaction is a 5'-end FAD-phospho-ribonucleoside in mRNA + H2O = a 5'-end phospho-ribonucleoside in mRNA + FAD + H(+). It catalyses the reaction a 5'-end CoA-ribonucleoside in mRNA + H2O = 3'-dephospho-CoA + a 5'-end phospho-ribonucleoside in mRNA + H(+). The 5'-3' exoribonuclease activity is inhibited by adenosine 3',5'-bisphosphate. Functionally, decapping enzyme for NAD-capped RNAs: specifically hydrolyzes the nicotinamide adenine dinucleotide (NAD) cap from a subset of RNAs by removing the entire NAD moiety from the 5'-end of an NAD-capped RNA. The NAD-cap is present at the 5'-end of some RNAs and snoRNAs. In contrast to the canonical 5'-end N7 methylguanosine (m7G) cap, the NAD cap promotes mRNA decay. Preferentially acts on NAD-capped transcripts in response to environmental stress. Also acts as a non-canonical decapping enzyme that removes the entire cap structure of m7G capped or incompletely capped RNAs and mediates their subsequent degradation. Specifically degrades pre-mRNAs with a defective 5'-end m7G cap and is part of a pre-mRNA capping quality control. Has decapping activity toward incomplete 5'-end m7G cap mRNAs such as unmethylated 5'-end-capped RNA (cap0), while it has no activity toward 2'-O-ribose methylated m7G cap (cap1). In contrast to canonical decapping enzymes DCP2 and NUDT16, which cleave the cap within the triphosphate linkage, the decapping activity releases the entire cap structure GpppN and a 5'-end monophosphate RNA. Also has 5'-3' exoribonuclease activities: The 5'-end monophosphate RNA is then degraded by the 5'-3' exoribonuclease activity, enabling this enzyme to decap and degrade incompletely capped mRNAs. Also possesses RNA 5'-pyrophosphohydrolase activity by hydrolyzing the 5'-end triphosphate to release pyrophosphates. Exhibits decapping activity towards FAD-capped RNAs. Exhibits decapping activity towards dpCoA-capped RNAs in vitro. This Mus musculus (Mouse) protein is Decapping and exoribonuclease protein.